The sequence spans 340 residues: SH2 domain-containing adapter protein D (340 aa).

3 disordered regions span residues 1–77 (MAKW…PKHR), 94–186 (GGPG…QPWE), and 198–230 (VQFD…ERVD). The segment covering 98 to 108 (EELEADTEYLD) has biased composition (acidic residues). Over residues 171–186 (PQEDERPADEYDQPWE) the composition is skewed to basic and acidic residues. One can recognise an SH2 domain in the interval 240-335 (WFHGPLNRAD…AEHLALLYPV (96 aa)).

In terms of processing, tyrosine phosphorylated by ABL.

In terms of biological role, may function as an adapter protein. This is SH2 domain-containing adapter protein D (SHD) from Homo sapiens (Human).